A 447-amino-acid polypeptide reads, in one-letter code: MTTILKHLPVGQRIGIAFSGGLDTSAALLWMRQKGAVPYAYTANLGQPDEEDYDAIPRRAMEYGAENARLIDCRKQLVAEGIAAIQCGAFHNTTGGLTYFNTTPLGRAVTGTMLVAAMKEDGVNIWGDGSTYKGNDIERFYRYGLLTNAELQIYKPWLDTDFIDELGGRHEMSEFMIACGFDYKMSVEKAYSTDSNMLGATHEAKDLEYLNSSVKIVNPIMGVKFWDESVKIPAEEVTVRFEQGHPVALNGKTFSDDVEMLLEANRIGGRHGLGMSDQIENRIIEAKSRGIYEAPGMALLHIAYERLLTGIHNEDTIEQYHAHGRQLGRLLYQGRWFDSQALMLRDSLQRWVASQITGEVTLELRRGNDYSILNTVSENLTYKPERLTMEKGDSVFSPDDRIGQLTMRNLDITDTREKLFGYAKTGLLSSSATSGVPQVENLENKGQ.

ATP contacts are provided by residues 17 to 25 (AFSGGLDTS) and alanine 43. An L-citrulline-binding site is contributed by tyrosine 99. Positions 129 and 131 each coordinate ATP. 3 residues coordinate L-aspartate: threonine 131, asparagine 135, and aspartate 136. Position 135 (asparagine 135) interacts with L-citrulline. ATP is bound at residue aspartate 136. The L-citrulline site is built by arginine 139 and serine 192. Aspartate 194 contacts ATP. Residues threonine 201, glutamate 203, and glutamate 280 each coordinate L-citrulline.

Belongs to the argininosuccinate synthase family. Type 2 subfamily. As to quaternary structure, homotetramer.

It is found in the cytoplasm. The enzyme catalyses L-citrulline + L-aspartate + ATP = 2-(N(omega)-L-arginino)succinate + AMP + diphosphate + H(+). The protein operates within amino-acid biosynthesis; L-arginine biosynthesis; L-arginine from L-ornithine and carbamoyl phosphate: step 2/3. This Escherichia coli O1:K1 / APEC protein is Argininosuccinate synthase.